Consider the following 733-residue polypeptide: Phosphoribosylformylglycinamidine synthase subunit PurL (733 aa).

H41 is an active-site residue. 2 residues coordinate ATP: Y44 and K83. Position 85 (E85) interacts with Mg(2+). Residues 86-89 and R108 each bind substrate; that span reads SHNH. Residue H87 is the Proton acceptor of the active site. Mg(2+) is bound at residue D109. Residues 212 to 232 are disordered; sequence GASFASQELSEESEEKRPSVQ. Q232 contributes to the substrate binding site. D260 is a binding site for Mg(2+). Residue 304 to 306 coordinates substrate; sequence ESQ. Residues D488 and G525 each contribute to the ATP site. N526 provides a ligand contact to Mg(2+). S528 provides a ligand contact to substrate.

Belongs to the FGAMS family. In terms of assembly, monomer. Part of the FGAM synthase complex composed of 1 PurL, 1 PurQ and 2 PurS subunits.

Its subcellular location is the cytoplasm. The catalysed reaction is N(2)-formyl-N(1)-(5-phospho-beta-D-ribosyl)glycinamide + L-glutamine + ATP + H2O = 2-formamido-N(1)-(5-O-phospho-beta-D-ribosyl)acetamidine + L-glutamate + ADP + phosphate + H(+). The protein operates within purine metabolism; IMP biosynthesis via de novo pathway; 5-amino-1-(5-phospho-D-ribosyl)imidazole from N(2)-formyl-N(1)-(5-phospho-D-ribosyl)glycinamide: step 1/2. Part of the phosphoribosylformylglycinamidine synthase complex involved in the purines biosynthetic pathway. Catalyzes the ATP-dependent conversion of formylglycinamide ribonucleotide (FGAR) and glutamine to yield formylglycinamidine ribonucleotide (FGAM) and glutamate. The FGAM synthase complex is composed of three subunits. PurQ produces an ammonia molecule by converting glutamine to glutamate. PurL transfers the ammonia molecule to FGAR to form FGAM in an ATP-dependent manner. PurS interacts with PurQ and PurL and is thought to assist in the transfer of the ammonia molecule from PurQ to PurL. The protein is Phosphoribosylformylglycinamidine synthase subunit PurL of Caldanaerobacter subterraneus subsp. tengcongensis (strain DSM 15242 / JCM 11007 / NBRC 100824 / MB4) (Thermoanaerobacter tengcongensis).